The primary structure comprises 345 residues: Protein-glutamate methylesterase/protein-glutamine glutaminase 2 (345 aa).

Residues 7–124 (KVLVVDDSPV…TADMLGYRSL (118 aa)) form the Response regulatory domain. Asp-58 carries the 4-aspartylphosphate modification. The CheB-type methylesterase domain maps to 154–345 (STSQYQLIAI…LPQFLCDLLS (192 aa)). Residues Ser-166, His-192, and Asp-289 contribute to the active site.

The protein belongs to the CheB family. Phosphorylated by CheA. Phosphorylation of the N-terminal regulatory domain activates the methylesterase activity.

Its subcellular location is the cytoplasm. It catalyses the reaction [protein]-L-glutamate 5-O-methyl ester + H2O = L-glutamyl-[protein] + methanol + H(+). The catalysed reaction is L-glutaminyl-[protein] + H2O = L-glutamyl-[protein] + NH4(+). In terms of biological role, involved in chemotaxis. Part of a chemotaxis signal transduction system that modulates chemotaxis in response to various stimuli. Catalyzes the demethylation of specific methylglutamate residues introduced into the chemoreceptors (methyl-accepting chemotaxis proteins or MCP) by CheR. Also mediates the irreversible deamidation of specific glutamine residues to glutamic acid. This is Protein-glutamate methylesterase/protein-glutamine glutaminase 2 from Vibrio vulnificus (strain YJ016).